We begin with the raw amino-acid sequence, 664 residues long: DNA ligase (664 aa).

NAD(+) contacts are provided by residues 32-36 (DKEYD) and 80-81 (SL). The N6-AMP-lysine intermediate role is filled by K122. Residues R144, E178, and K314 each coordinate NAD(+). Positions 407, 410, 423, and 429 each coordinate Zn(2+). The region spanning 587 to 664 (IDENPFMDKT…NEEEFSNKIK (78 aa)) is the BRCT domain.

The protein belongs to the NAD-dependent DNA ligase family. LigA subfamily. It depends on Mg(2+) as a cofactor. Mn(2+) serves as cofactor.

It carries out the reaction NAD(+) + (deoxyribonucleotide)n-3'-hydroxyl + 5'-phospho-(deoxyribonucleotide)m = (deoxyribonucleotide)n+m + AMP + beta-nicotinamide D-nucleotide.. In terms of biological role, DNA ligase that catalyzes the formation of phosphodiester linkages between 5'-phosphoryl and 3'-hydroxyl groups in double-stranded DNA using NAD as a coenzyme and as the energy source for the reaction. It is essential for DNA replication and repair of damaged DNA. In Clostridium botulinum (strain ATCC 19397 / Type A), this protein is DNA ligase.